We begin with the raw amino-acid sequence, 300 residues long: Probable alpha-L-glutamate ligase (300 aa).

The ATP-grasp domain occupies 104–287; that stretch reads LQLLARQGID…IAGKMISWIE (184 aa). Residues Lys-141, 178–179, Asp-187, and 211–213 each bind ATP; these read EY and RSN. Asp-248, Glu-260, and Asn-262 together coordinate Mg(2+). 3 residues coordinate Mn(2+): Asp-248, Glu-260, and Asn-262.

The protein belongs to the RimK family. The cofactor is Mg(2+). It depends on Mn(2+) as a cofactor.

This Enterobacter sp. (strain 638) protein is Probable alpha-L-glutamate ligase.